Consider the following 633-residue polypeptide: 1-deoxy-D-xylulose-5-phosphate synthase 2 (633 aa).

Thiamine diphosphate-binding positions include His-73 and 113–115 (SHA). Asp-145 lines the Mg(2+) pocket. Residues 146 to 147 (GA), Asn-175, Tyr-286, and Glu-367 contribute to the thiamine diphosphate site. Asn-175 lines the Mg(2+) pocket.

This sequence belongs to the transketolase family. DXPS subfamily. In terms of assembly, homodimer. The cofactor is Mg(2+). It depends on thiamine diphosphate as a cofactor.

It carries out the reaction D-glyceraldehyde 3-phosphate + pyruvate + H(+) = 1-deoxy-D-xylulose 5-phosphate + CO2. It participates in metabolic intermediate biosynthesis; 1-deoxy-D-xylulose 5-phosphate biosynthesis; 1-deoxy-D-xylulose 5-phosphate from D-glyceraldehyde 3-phosphate and pyruvate: step 1/1. Its function is as follows. Catalyzes the acyloin condensation reaction between C atoms 2 and 3 of pyruvate and glyceraldehyde 3-phosphate to yield 1-deoxy-D-xylulose-5-phosphate (DXP). The sequence is that of 1-deoxy-D-xylulose-5-phosphate synthase 2 from Kitasatospora griseola (Streptomyces griseolosporeus).